We begin with the raw amino-acid sequence, 265 residues long: 2-C-methyl-D-erythritol 4-phosphate cytidylyltransferase (265 aa).

Residues 231–241 (DRGGASREAER) show a composition bias toward basic and acidic residues. The disordered stretch occupies residues 231-265 (DRGGASREAERSAMPSAATSVFSGARSAASGSEEV). Residues 253-265 (SGARSAASGSEEV) show a composition bias toward low complexity.

This sequence belongs to the IspD/TarI cytidylyltransferase family. IspD subfamily.

It carries out the reaction 2-C-methyl-D-erythritol 4-phosphate + CTP + H(+) = 4-CDP-2-C-methyl-D-erythritol + diphosphate. Its pathway is isoprenoid biosynthesis; isopentenyl diphosphate biosynthesis via DXP pathway; isopentenyl diphosphate from 1-deoxy-D-xylulose 5-phosphate: step 2/6. Its function is as follows. Catalyzes the formation of 4-diphosphocytidyl-2-C-methyl-D-erythritol from CTP and 2-C-methyl-D-erythritol 4-phosphate (MEP). The sequence is that of 2-C-methyl-D-erythritol 4-phosphate cytidylyltransferase from Xanthomonas campestris pv. campestris (strain 8004).